A 438-amino-acid chain; its full sequence is MADYQDKNVVIIGLGLTGLSCVDFFLARGVTPRVMDTRVTPPGLDKLPQEVERHVGGLNDEWLLAADLIVASPGIALAHPSLSAAASAGVEIVGDIELFCREAQAPIVAITGSNGKSTVTTLVGEMAKAAGVNVGVGGNIGLPALMLLDADRELYVLELSSFQLETTSSLQAAAATVLNVTEDHMDRYPFGLQQYRAAKLRVYEKAKVCVVNADDALTMPVRGADERCVSFGVNMGDYHLNRQQGETWLRVKGEKVLNVKEMKLSGQHNYTNALAALALADAVGLPRASSLKALTTFTGLAHRFQLALEHNGVRWINDSKATNVGSTEAALNGLHVDGTLHLLLGGDGKSADFSPLARYLTGDRIRLYCFGRDGAQLAALRPEIAQQTETMEEAMRLLAPRVQPGDMVLLSPACASLDQFKNFEQRGDVFTRLAKELG.

112–118 contacts ATP; sequence GSNGKST.

This sequence belongs to the MurCDEF family.

The protein localises to the cytoplasm. It catalyses the reaction UDP-N-acetyl-alpha-D-muramoyl-L-alanine + D-glutamate + ATP = UDP-N-acetyl-alpha-D-muramoyl-L-alanyl-D-glutamate + ADP + phosphate + H(+). Its pathway is cell wall biogenesis; peptidoglycan biosynthesis. Cell wall formation. Catalyzes the addition of glutamate to the nucleotide precursor UDP-N-acetylmuramoyl-L-alanine (UMA). This chain is UDP-N-acetylmuramoylalanine--D-glutamate ligase, found in Salmonella paratyphi A (strain ATCC 9150 / SARB42).